An 876-amino-acid polypeptide reads, in one-letter code: Valine--tRNA ligase (876 aa).

The 'HIGH' region motif lies at 44-54 (PNVTGKLHLGH). The short motif at 520–524 (KMSKS) is the 'KMSKS' region element. Lysine 523 contributes to the ATP binding site. The stretch at 805 to 876 (LEGLIDMDKE…VKNRIEQLKA (72 aa)) forms a coiled coil.

Belongs to the class-I aminoacyl-tRNA synthetase family. ValS type 1 subfamily. In terms of assembly, monomer.

The protein resides in the cytoplasm. It catalyses the reaction tRNA(Val) + L-valine + ATP = L-valyl-tRNA(Val) + AMP + diphosphate. In terms of biological role, catalyzes the attachment of valine to tRNA(Val). As ValRS can inadvertently accommodate and process structurally similar amino acids such as threonine, to avoid such errors, it has a 'posttransfer' editing activity that hydrolyzes mischarged Thr-tRNA(Val) in a tRNA-dependent manner. This chain is Valine--tRNA ligase, found in Staphylococcus haemolyticus (strain JCSC1435).